We begin with the raw amino-acid sequence, 385 residues long: Tryptophan--tRNA ligase (385 aa).

The 'HIGH' region signature appears at 89–98 (PSSKTMHIGH). The short motif at 268-272 (KMSAS) is the 'KMSKS' region element.

This sequence belongs to the class-I aminoacyl-tRNA synthetase family. In terms of assembly, homodimer.

It carries out the reaction tRNA(Trp) + L-tryptophan + ATP = L-tryptophyl-tRNA(Trp) + AMP + diphosphate + H(+). The sequence is that of Tryptophan--tRNA ligase from Encephalitozoon cuniculi (strain GB-M1) (Microsporidian parasite).